The primary structure comprises 166 residues: Small ribosomal subunit protein uS5 (166 aa).

Positions 11-74 constitute an S5 DRBM domain; the sequence is LQEKLIAVNR…EKARRNMINV (64 aa).

It belongs to the universal ribosomal protein uS5 family. In terms of assembly, part of the 30S ribosomal subunit. Contacts proteins S4 and S8.

Functionally, with S4 and S12 plays an important role in translational accuracy. In terms of biological role, located at the back of the 30S subunit body where it stabilizes the conformation of the head with respect to the body. The chain is Small ribosomal subunit protein uS5 from Actinobacillus pleuropneumoniae serotype 5b (strain L20).